Consider the following 359-residue polypeptide: Probable S-adenosylmethionine-dependent methyltransferase At5g38100 (359 aa).

Residues Tyr19, Cys63, Asn68, Asp104, Ser133, and Phe134 each coordinate S-adenosyl-L-homocysteine. Mg(2+)-binding residues include Asn172, Asp258, and Phe260.

This sequence belongs to the methyltransferase superfamily. Type-7 methyltransferase family. Homodimer. The cofactor is Mg(2+).

The chain is Probable S-adenosylmethionine-dependent methyltransferase At5g38100 from Arabidopsis thaliana (Mouse-ear cress).